The chain runs to 418 residues: Glutamyl-tRNA reductase (418 aa).

Substrate-binding positions include 51 to 54 (TCNR), Ser-107, 112 to 114 (EPQ), and Gln-118. The Nucleophile role is filled by Cys-52. 187–192 (GAGETA) contacts NADP(+).

This sequence belongs to the glutamyl-tRNA reductase family. In terms of assembly, homodimer.

The catalysed reaction is (S)-4-amino-5-oxopentanoate + tRNA(Glu) + NADP(+) = L-glutamyl-tRNA(Glu) + NADPH + H(+). It participates in porphyrin-containing compound metabolism; protoporphyrin-IX biosynthesis; 5-aminolevulinate from L-glutamyl-tRNA(Glu): step 1/2. Its function is as follows. Catalyzes the NADPH-dependent reduction of glutamyl-tRNA(Glu) to glutamate 1-semialdehyde (GSA). In Dichelobacter nodosus (strain VCS1703A), this protein is Glutamyl-tRNA reductase.